Here is a 152-residue protein sequence, read N- to C-terminus: Small ribosomal subunit protein uS13A (152 aa).

This sequence belongs to the universal ribosomal protein uS13 family. In terms of assembly, component of the small ribosomal subunit (SSU). Mature yeast ribosomes consist of a small (40S) and a large (60S) subunit. The 40S small subunit contains 1 molecule of ribosomal RNA (18S rRNA) and at least 33 different proteins. The large 60S subunit contains 3 rRNA molecules (25S, 5.8S and 5S rRNA) and at least 46 different proteins.

Its subcellular location is the cytoplasm. Its function is as follows. Component of the ribosome, a large ribonucleoprotein complex responsible for the synthesis of proteins in the cell. The small ribosomal subunit (SSU) binds messenger RNAs (mRNAs) and translates the encoded message by selecting cognate aminoacyl-transfer RNA (tRNA) molecules. The large subunit (LSU) contains the ribosomal catalytic site termed the peptidyl transferase center (PTC), which catalyzes the formation of peptide bonds, thereby polymerizing the amino acids delivered by tRNAs into a polypeptide chain. The nascent polypeptides leave the ribosome through a tunnel in the LSU and interact with protein factors that function in enzymatic processing, targeting, and the membrane insertion of nascent chains at the exit of the ribosomal tunnel. This Schizosaccharomyces pombe (strain 972 / ATCC 24843) (Fission yeast) protein is Small ribosomal subunit protein uS13A (rps1801).